A 427-amino-acid chain; its full sequence is Enolase (427 aa).

Residue Q163 coordinates (2R)-2-phosphoglycerate. Residue E205 is the Proton donor of the active site. The Mg(2+) site is built by D242, E285, and D312. (2R)-2-phosphoglycerate is bound by residues K337, R366, S367, and K388. The active-site Proton acceptor is K337.

This sequence belongs to the enolase family. Requires Mg(2+) as cofactor.

The protein resides in the cytoplasm. The protein localises to the secreted. Its subcellular location is the cell surface. The catalysed reaction is (2R)-2-phosphoglycerate = phosphoenolpyruvate + H2O. The protein operates within carbohydrate degradation; glycolysis; pyruvate from D-glyceraldehyde 3-phosphate: step 4/5. Its function is as follows. Catalyzes the reversible conversion of 2-phosphoglycerate (2-PG) into phosphoenolpyruvate (PEP). It is essential for the degradation of carbohydrates via glycolysis. This is Enolase from Burkholderia multivorans (strain ATCC 17616 / 249).